Here is a 409-residue protein sequence, read N- to C-terminus: Epoxyqueuosine reductase (409 aa).

The segment at 1–23 (MDRNPELAIADARPSQDGRAAPS) is disordered. Asp178 acts as the Proton donor in catalysis. One can recognise a 4Fe-4S ferredoxin-type domain in the interval 232 to 261 (AAPETPGAHCGSCTRCLGACPTGAIVAPYR). Residues Cys241, Cys244, Cys247, Cys251, Cys267, Cys294, Cys297, and Cys301 each contribute to the [4Fe-4S] cluster site.

It belongs to the QueG family. As to quaternary structure, monomer. Cob(II)alamin is required as a cofactor. Requires [4Fe-4S] cluster as cofactor.

It localises to the cytoplasm. It carries out the reaction epoxyqueuosine(34) in tRNA + AH2 = queuosine(34) in tRNA + A + H2O. Its pathway is tRNA modification; tRNA-queuosine biosynthesis. In terms of biological role, catalyzes the conversion of epoxyqueuosine (oQ) to queuosine (Q), which is a hypermodified base found in the wobble positions of tRNA(Asp), tRNA(Asn), tRNA(His) and tRNA(Tyr). The sequence is that of Epoxyqueuosine reductase from Burkholderia pseudomallei (strain K96243).